A 686-amino-acid polypeptide reads, in one-letter code: Disintegrin and metalloproteinase domain-containing protein 17 homolog (686 aa).

The signal sequence occupies residues 1-21 (MKIQDRSLLIFLVLGILKSDA). Positions 22–177 (FNTRVKRHAP…RRAIAIPSDR (156 aa)) are excised as a propeptide. 3 N-linked (GlcNAc...) asparagine glycosylation sites follow: asparagine 59, asparagine 206, and asparagine 262. Over 178–637 (RKDVLNVKRN…TGGVLEFIKT (460 aa)) the chain is Extracellular. The 259-residue stretch at 187-445 (NRCTLKLVAD…KWESCFQEEM (259 aa)) folds into the Peptidase M12B domain. 2 disulfides stabilise this stretch: cysteine 328-cysteine 440 and cysteine 394-cysteine 424. Histidine 370 is a Zn(2+) binding site. Residue glutamate 371 is part of the active site. Zn(2+) is bound by residues histidine 374 and histidine 380. Residues 446 to 535 (TSFCGNGIVE…ECPSAPPVRD (90 aa)) form the Disintegrin domain. Asparagine 501 carries N-linked (GlcNAc...) asparagine glycosylation. Cysteine 506 and cysteine 527 are oxidised to a cystine. Residue asparagine 581 is glycosylated (N-linked (GlcNAc...) asparagine). A helical transmembrane segment spans residues 638–658 (HIVVIAIIFFTLIFVGIYKIV). Over 659-686 (KYGENFTEKVTHKTAGGCRSVFVKADVN) the chain is Cytoplasmic.

Zn(2+) is required as a cofactor.

It localises to the cell membrane. Its function is as follows. Metalloprotease. Acts together with protease sup-17 to facilitate lin-12/Notch signaling during developmental cell fate decision, including anchor cell/ventral uterine precursor cell decision. By modulating glp-1/Notch signaling, plays a role in germline development. This is Disintegrin and metalloproteinase domain-containing protein 17 homolog from Caenorhabditis elegans.